Reading from the N-terminus, the 346-residue chain is tRNA N6-adenosine threonylcarbamoyltransferase (346 aa).

Positions 117 and 121 each coordinate Fe cation. Substrate contacts are provided by residues 139–143, D172, G185, D189, and N278; that span reads QVSGG. D308 is a binding site for Fe cation.

Belongs to the KAE1 / TsaD family. Fe(2+) serves as cofactor.

Its subcellular location is the cytoplasm. The enzyme catalyses L-threonylcarbamoyladenylate + adenosine(37) in tRNA = N(6)-L-threonylcarbamoyladenosine(37) in tRNA + AMP + H(+). Required for the formation of a threonylcarbamoyl group on adenosine at position 37 (t(6)A37) in tRNAs that read codons beginning with adenine. Is involved in the transfer of the threonylcarbamoyl moiety of threonylcarbamoyl-AMP (TC-AMP) to the N6 group of A37, together with TsaE and TsaB. TsaD likely plays a direct catalytic role in this reaction. The sequence is that of tRNA N6-adenosine threonylcarbamoyltransferase from Lactobacillus delbrueckii subsp. bulgaricus (strain ATCC 11842 / DSM 20081 / BCRC 10696 / JCM 1002 / NBRC 13953 / NCIMB 11778 / NCTC 12712 / WDCM 00102 / Lb 14).